The following is a 276-amino-acid chain: Undecaprenyl-diphosphatase (276 aa).

8 consecutive transmembrane segments (helical) span residues 6-26 (IEIL…WLPI), 49-69 (EMFF…MFWN), 89-109 (FSLW…GILF), 117-137 (LHTP…FIVI), 151-171 (LADI…LSLI), 181-201 (IIGA…TFFL), 224-244 (AELL…VFVI), and 256-276 (FKVF…ITAI).

It belongs to the UppP family.

Its subcellular location is the cell membrane. It carries out the reaction di-trans,octa-cis-undecaprenyl diphosphate + H2O = di-trans,octa-cis-undecaprenyl phosphate + phosphate + H(+). Its function is as follows. Catalyzes the dephosphorylation of undecaprenyl diphosphate (UPP). Confers resistance to bacitracin. The polypeptide is Undecaprenyl-diphosphatase (Enterococcus faecalis (Streptococcus faecalis)).